A 160-amino-acid chain; its full sequence is Cytochrome b6-f complex subunit 4 (160 aa).

The next 3 helical transmembrane spans lie at 36–56 (LLYVFPLTMLGTLTCIVGLSV), 95–115 (LLGVLAMAAVPLGLITVPFIE), and 131–151 (LTFIFGFFTAVWLGIGACVPI).

This sequence belongs to the cytochrome b family. PetD subfamily. The 4 large subunits of the cytochrome b6-f complex are cytochrome b6, subunit IV (17 kDa polypeptide, petD), cytochrome f and the Rieske protein, while the 4 small subunits are petG, petL, petM and petN. The complex functions as a dimer.

The protein resides in the plastid. The protein localises to the chloroplast thylakoid membrane. Its function is as follows. Component of the cytochrome b6-f complex, which mediates electron transfer between photosystem II (PSII) and photosystem I (PSI), cyclic electron flow around PSI, and state transitions. This is Cytochrome b6-f complex subunit 4 from Phaeodactylum tricornutum (strain CCAP 1055/1).